Reading from the N-terminus, the 436-residue chain is Acrosin (436 aa).

The signal sequence occupies residues 1 to 19 (MVEMLPTVAVLVLAVSVVA). Residue N22 is glycosylated (N-linked (GlcNAc...) asparagine). Intrachain disulfides connect C25-C155, C29-C163, C74-C90, C178-C247, C210-C226, and C237-C267. The Peptidase S1 domain maps to 43–291 (IVSGQSAQLG…YLDWIASKIG (249 aa)). Catalysis depends on charge relay system residues H89 and D143. N-linked (GlcNAc...) asparagine glycosylation occurs at N211. The Charge relay system role is filled by S241. Positions 346–436 (PSSTQTSSSL…NKPSEPFLHS (91 aa)) are cleaved as a propeptide — pro-rich.

It belongs to the peptidase S1 family. As to quaternary structure, heavy chain (catalytic) and a light chain linked by two disulfide bonds. Forms a heterodimer with SERPINA5.

The catalysed reaction is Preferential cleavage: Arg-|-Xaa, Lys-|-Xaa.. With respect to regulation, inhibited by SERPINA5. Functionally, acrosin is the major protease of mammalian spermatozoa. It is a serine protease of trypsin-like cleavage specificity, it is synthesized in a zymogen form, proacrosin and stored in the acrosome. The chain is Acrosin (Acr) from Mus musculus (Mouse).